The following is a 220-amino-acid chain: MTQDELKALVGQAAVAYVPDGSVVGVGTGSTVNCFIDALAAIKDRIAGAVSSSVRSTERLQALGIPVLDLSQVERIPVYIDGADEIDPRGHMIKGGGAALTREKIVADLAERFVCIADASKRVDVMGRFPLPVEVIPMAAAQVARRFGAAYGGLARVREGVVTDNGNLILDVTGLHIADPLAMETEVNQWPGVVCVGIFARHKAAVCLLGTPEGVRTLNF.

Residues 28-31, 81-84, and 94-97 contribute to the substrate site; these read TGST, DGAD, and KGGG. Residue glutamate 103 is the Proton acceptor of the active site. A substrate-binding site is contributed by lysine 121.

The protein belongs to the ribose 5-phosphate isomerase family. Homodimer.

It carries out the reaction aldehydo-D-ribose 5-phosphate = D-ribulose 5-phosphate. It participates in carbohydrate degradation; pentose phosphate pathway; D-ribose 5-phosphate from D-ribulose 5-phosphate (non-oxidative stage): step 1/1. In terms of biological role, catalyzes the reversible conversion of ribose-5-phosphate to ribulose 5-phosphate. The sequence is that of Ribose-5-phosphate isomerase A from Leptothrix cholodnii (strain ATCC 51168 / LMG 8142 / SP-6) (Leptothrix discophora (strain SP-6)).